Consider the following 352-residue polypeptide: Neutral protease 2 homolog ATEG_04941 (352 aa).

The N-terminal stretch at M1 to A19 is a signal peptide. Residues L20–R175 constitute a propeptide that is removed on maturation. Intrachain disulfides connect C181–C253 and C260–C278. A Zn(2+)-binding site is contributed by H303. E304 is a catalytic residue. Zn(2+) is bound by residues H307 and D318.

The protein belongs to the peptidase M35 family. Zn(2+) serves as cofactor.

The protein localises to the secreted. It carries out the reaction Preferential cleavage of bonds with hydrophobic residues in P1'. Also 3-Asn-|-Gln-4 and 8-Gly-|-Ser-9 bonds in insulin B chain.. Functionally, secreted metalloproteinase that allows assimilation of proteinaceous substrates. Shows high activities on basic nuclear substrates such as histone and protamine. The polypeptide is Neutral protease 2 homolog ATEG_04941 (Aspergillus terreus (strain NIH 2624 / FGSC A1156)).